The chain runs to 305 residues: MIKQRTLKRIVQATGVGLHTGKKVTLTLRPAPANTGVIYRRTDLNPPVDFPADAKSVRDTMLCTCLVNEHDVRISTVEHLNAALAGLGIDNIIVEVDAPEIPIMDGSAAPFVYLLLDAGIDELNCAKKFVRIKETVRVEDGDKWAEFKPYNGFSLDFTIDFNHPAIDASTQRYTLNFSADAFMRQISRARTFGFMRDIEYLQSRGLCLGGSFDCAIVVDDYRVLNEDGLRFEDEFVRHKMLDAIGDLFMCGHNIIGAFTAYKSGHALNNKLLQAVLAKQEAWEYVTFEDDAKLPMAFRAPSMVLA.

Residues H79, H238, and D242 each contribute to the Zn(2+) site. H265 functions as the Proton donor in the catalytic mechanism.

This sequence belongs to the LpxC family. Zn(2+) serves as cofactor.

The catalysed reaction is a UDP-3-O-[(3R)-3-hydroxyacyl]-N-acetyl-alpha-D-glucosamine + H2O = a UDP-3-O-[(3R)-3-hydroxyacyl]-alpha-D-glucosamine + acetate. Its pathway is glycolipid biosynthesis; lipid IV(A) biosynthesis; lipid IV(A) from (3R)-3-hydroxytetradecanoyl-[acyl-carrier-protein] and UDP-N-acetyl-alpha-D-glucosamine: step 2/6. Catalyzes the hydrolysis of UDP-3-O-myristoyl-N-acetylglucosamine to form UDP-3-O-myristoylglucosamine and acetate, the committed step in lipid A biosynthesis. The chain is UDP-3-O-acyl-N-acetylglucosamine deacetylase from Klebsiella pneumoniae subsp. pneumoniae (strain ATCC 700721 / MGH 78578).